Reading from the N-terminus, the 794-residue chain is Protocadherin beta-6 (794 aa).

The N-terminal stretch at 1–27 is a signal peptide; the sequence is MMQTKVQNKKRQVAFFILLMLWGEVGS. Residues 28 to 688 lie on the Extracellular side of the membrane; it reads ESIQYSVLEE…AQADSLTVYL (661 aa). 5 Cadherin domains span residues 34 to 132, 137 to 241, 246 to 345, 350 to 449, and 454 to 559; these read VLEE…APEF, MLLK…VPEF, YEAQ…APEL, FISL…APAF, and YTLF…SPFV. A glycan (N-linked (GlcNAc...) asparagine) is linked at N46. A disulfide bridge links C95 with C101. N183 carries N-linked (GlcNAc...) asparagine glycosylation. N-linked (GlcNAc...) asparagine glycosylation is present at N416. An N-linked (GlcNAc...) asparagine glycan is attached at N565. The region spanning 566–669 is the Cadherin 6 domain; it reads GSAPCTELVP…LVDGFSQPYL (104 aa). The helical transmembrane segment at 689–709 threads the bilayer; that stretch reads VVALASVSSLFLFSVLLFVAV. Residues 710–794 lie on the Cytoplasmic side of the membrane; sequence RLCRRSRAAS…PTSRNSFPFS (85 aa). The disordered stretch occupies residues 773 to 794; the sequence is PPQGTEREMEETPTSRNSFPFS. The span at 784–794 shows a compositional bias: polar residues; the sequence is TPTSRNSFPFS.

In terms of assembly, forms homodimers in trans (molecules expressed by two different cells). Forms promiscuous heterodimers in cis (at the plasma membrane of the same cell) with other protocadherins.

The protein localises to the cell membrane. Its function is as follows. Calcium-dependent cell-adhesion protein involved in cells self-recognition and non-self discrimination. Thereby, it is involved in the establishment and maintenance of specific neuronal connections in the brain. In Homo sapiens (Human), this protein is Protocadherin beta-6.